We begin with the raw amino-acid sequence, 434 residues long: Eukaryotic translation initiation factor 3 subunit E (434 aa).

Residues 219-392 (FFNHPKGRDL…GHVVMGTQPL (174 aa)) form the PCI domain.

Belongs to the eIF-3 subunit E family. As to quaternary structure, component of the eukaryotic translation initiation factor 3 (eIF-3) complex. The eIF-3 complex interacts with pix. Interacts with mxt.

It is found in the cytoplasm. Its function is as follows. Component of the eukaryotic translation initiation factor 3 (eIF-3) complex, which is involved in protein synthesis of a specialized repertoire of mRNAs and, together with other initiation factors, stimulates binding of mRNA and methionyl-tRNAi to the 40S ribosome. The eIF-3 complex specifically targets and initiates translation of a subset of mRNAs involved in cell proliferation. The protein is Eukaryotic translation initiation factor 3 subunit E (eIF3-S6) of Drosophila grimshawi (Hawaiian fruit fly).